Reading from the N-terminus, the 418-residue chain is Glutamyl-tRNA reductase (418 aa).

Substrate-binding positions include 49 to 52 (TCNR), serine 109, 114 to 116 (EPQ), and glutamine 120. The Nucleophile role is filled by cysteine 50. 189 to 194 (GAGETI) contacts NADP(+).

Belongs to the glutamyl-tRNA reductase family. In terms of assembly, homodimer.

The enzyme catalyses (S)-4-amino-5-oxopentanoate + tRNA(Glu) + NADP(+) = L-glutamyl-tRNA(Glu) + NADPH + H(+). It participates in porphyrin-containing compound metabolism; protoporphyrin-IX biosynthesis; 5-aminolevulinate from L-glutamyl-tRNA(Glu): step 1/2. In terms of biological role, catalyzes the NADPH-dependent reduction of glutamyl-tRNA(Glu) to glutamate 1-semialdehyde (GSA). In Escherichia coli O7:K1 (strain IAI39 / ExPEC), this protein is Glutamyl-tRNA reductase.